The primary structure comprises 340 residues: Ketol-acid reductoisomerase (NADP(+)) (340 aa).

The KARI N-terminal Rossmann domain occupies 3–182 (VTMYYEEDVE…GCARVGIIET (180 aa)). Residues 26–29 (YGSQ), Arg49, Ser53, and 83–86 (DELQ) contribute to the NADP(+) site. Residue His108 is part of the active site. Gly134 provides a ligand contact to NADP(+). The KARI C-terminal knotted domain maps to 183-328 (TFKEETEEDL…AELRKAMPFT (146 aa)). Positions 191, 195, 227, and 231 each coordinate Mg(2+). Ser252 serves as a coordination point for substrate.

It belongs to the ketol-acid reductoisomerase family. Mg(2+) is required as a cofactor.

The catalysed reaction is (2R)-2,3-dihydroxy-3-methylbutanoate + NADP(+) = (2S)-2-acetolactate + NADPH + H(+). It catalyses the reaction (2R,3R)-2,3-dihydroxy-3-methylpentanoate + NADP(+) = (S)-2-ethyl-2-hydroxy-3-oxobutanoate + NADPH + H(+). Its pathway is amino-acid biosynthesis; L-isoleucine biosynthesis; L-isoleucine from 2-oxobutanoate: step 2/4. It participates in amino-acid biosynthesis; L-valine biosynthesis; L-valine from pyruvate: step 2/4. Functionally, involved in the biosynthesis of branched-chain amino acids (BCAA). Catalyzes an alkyl-migration followed by a ketol-acid reduction of (S)-2-acetolactate (S2AL) to yield (R)-2,3-dihydroxy-isovalerate. In the isomerase reaction, S2AL is rearranged via a Mg-dependent methyl migration to produce 3-hydroxy-3-methyl-2-ketobutyrate (HMKB). In the reductase reaction, this 2-ketoacid undergoes a metal-dependent reduction by NADPH to yield (R)-2,3-dihydroxy-isovalerate. The chain is Ketol-acid reductoisomerase (NADP(+)) from Lactococcus lactis subsp. cremoris (strain MG1363).